A 468-amino-acid chain; its full sequence is Neurexin-1-beta (468 aa).

A signal peptide spans 1-46 (MYQRMLRCGAELGSPGGGSSGGAGGRLALLWIVPLTLSGLLGVAWG). The Extracellular segment spans residues 47-391 (ASSLGAHHIH…AEVIRESSST (345 aa)). The Laminin G-like domain occupies 87–285 (YIFSKGGGQI…DANIAIVGNV (199 aa)). Ca(2+) contacts are provided by Asp-137 and Val-154. Residue Asn-184 is glycosylated (N-linked (GlcNAc...) asparagine). The interval 201–230 (GNNDNERLAIARQRIPYRLGRVVDEWLLDK) is essential for interaction with CBLN1; modulates interaction affinity with NLGN1, NLGN2 and NLGN3; prevents interaction with DAG1/alpha-dystroglycan; modulates interaction with alpha-latrotoxin. The Ca(2+) site is built by Ile-236 and Asn-238. Ser-346 is a glycosylation site (O-linked (Xyl...) (heparan sulfate) serine). Residues 350–381 (PSDDEDIDPCEPSSGGLANPTRVGGREPYPGS) are disordered. Residues 392-414 (TGMVVGIVAAAALCILILLYAMY) traverse the membrane as a helical segment. At 415–468 (KYRNRDEGSYHVDESRNYISNSAQSNGAVVKEKQPSSAKSANKNKKNKDKEYYV) the chain is on the cytoplasmic side. Positions 435 to 468 (NSAQSNGAVVKEKQPSSAKSANKNKKNKDKEYYV) are disordered. Phosphoserine is present on residues Ser-450, Ser-451, and Ser-454.

This sequence belongs to the neurexin family. As to quaternary structure, the cytoplasmic C-terminal region binds to CASK. Binds NLGN1, NLGN2 and NLGN3, DAG1 (alpha-dystroglycan) and alpha-latrotoxin. Binding to neuroligins is calcium-dependent, and the binding preference ranks as follow: NLGN1 &gt; NLGN4 &gt;&gt; NLGN3 &gt; NLGN2. Interacts with CBLN2 and more weakly with CBLN4. Interacts with CBLN1; interaction is CBLN1 hexamer form-dependent; CBLN1-binding is calcium-independent; isoform 1b does not interact with CBLN1. Interacts with CLSTN3. Post-translationally, N-glycosylated. In terms of processing, O-glycosylated; contains heparan sulfate. Heparan sulfate attachment is required for synapse development by mediating interactions with neuroligins. In terms of tissue distribution, brain.

Its subcellular location is the presynaptic cell membrane. Its function is as follows. Neuronal cell surface protein involved in cell recognition and cell adhesion by forming intracellular junctions through binding to neuroligins. Plays a role in formation of synaptic junctions. Functions as part of a trans-synaptic complex by binding to cerebellins and postsynaptic GRID1. This interaction helps regulate the activity of NMDA and AMPA receptors at hippocampal synapses without affecting synapse formation. NRXN1B-CBLN2-GRID1 complex transduce presynaptic signals into postsynaptic NMDAR response. In Rattus norvegicus (Rat), this protein is Neurexin-1-beta.